Here is a 254-residue protein sequence, read N- to C-terminus: Protein GVQW3 (254 aa).

This is Protein GVQW3 from Homo sapiens (Human).